The chain runs to 420 residues: L-rhamnose isomerase (420 aa).

3 residues coordinate Mn(2+): histidine 264, aspartate 296, and aspartate 298.

Belongs to the rhamnose isomerase family. Requires Mn(2+) as cofactor.

The protein localises to the cytoplasm. The enzyme catalyses L-rhamnopyranose = L-rhamnulose. The protein operates within carbohydrate degradation; L-rhamnose degradation; glycerone phosphate from L-rhamnose: step 1/3. Its function is as follows. Catalyzes the interconversion of L-rhamnose and L-rhamnulose. The protein is L-rhamnose isomerase of Listeria innocua serovar 6a (strain ATCC BAA-680 / CLIP 11262).